The chain runs to 512 residues: Sodium/proline symporter (512 aa).

Helical transmembrane passes span 16 to 36 (WQTY…GFYG), 54 to 74 (IGPY…WMIM), 85 to 105 (LSAM…YFVV), 139 to 159 (IISG…GFVS), 174 to 194 (FGLI…GYLA), 200 to 220 (FFQG…AMMN), 240 to 260 (LFKG…LGYF), 286 to 306 (ISWM…GIAF), 327 to 347 (VLFH…AIMS), 381 to 401 (FVMI…AIAW), 410 to 430 (LVGN…LFAL), 438 to 458 (AGAV…IAWI), and 467 to 487 (IFGL…TYVV).

The protein belongs to the sodium:solute symporter (SSF) (TC 2.A.21) family.

The protein localises to the cell membrane. The catalysed reaction is L-proline(in) + Na(+)(in) = L-proline(out) + Na(+)(out). Catalyzes the sodium-dependent uptake of extracellular L-proline. Since most S.aureus strains are L-proline auxotrophs, this transporter may aid the bacterial persistence during an infection of tissues with low proline concentrations. The protein is Sodium/proline symporter (putP) of Staphylococcus aureus (strain bovine RF122 / ET3-1).